The primary structure comprises 1543 residues: ATP-binding cassette sub-family C member 2 (1543 aa).

At 1 to 26 (MDEFCNSTFWNLSLLKSPEADLPLCF) the chain is on the extracellular side. 2 N-linked (GlcNAc...) asparagine glycosylation sites follow: Asn-6 and Asn-11. Residues 27–47 (EQTVLVWIPLGFLWLLAPWQL) traverse the membrane as a helical segment. Residues 48-67 (YRIYRSRTKRFAITKFYLAK) lie on the Cytoplasmic side of the membrane. Residues 68–88 (QVFVVCLLILAAIDLSLALTE) traverse the membrane as a helical segment. At 89–92 (DTGQ) the chain is on the extracellular side. Residues 93 to 113 (ATIPPVKYTNPILYLCTWLLV) form a helical membrane-spanning segment. Residues 114–125 (LVIQHCRQCCIQ) are Cytoplasmic-facing. The chain crosses the membrane as a helical span at residues 126 to 146 (KNSWFLSMFWILSLLCGIFQF). Residues 147–164 (QTLIRALLQDSKSNMTYS) are Extracellular-facing. N-linked (GlcNAc...) asparagine glycosylation is present at Asn-160. Residues 165-185 (CLFFVSYGFQIVILILSAFSE) traverse the membrane as a helical segment. Residues 186–311 (SSDSTHAPSA…DFPKSWLVKA (126 aa)) lie on the Cytoplasmic side of the membrane. The tract at residues 260-285 (LKKSQQSPEGTSHGLTKKQSQSQDVL) is disordered. Polar residues predominate over residues 263–283 (SQQSPEGTSHGLTKKQSQSQD). Phosphoserine is present on residues Ser-279 and Ser-281. A helical membrane pass occupies residues 312–332 (LFKTFYVVILKSFILKLAHDI). The 284-residue stretch at 320–603 (ILKSFILKLA…LPMVISSVIQ (284 aa)) folds into the ABC transmembrane type-1 1 domain. Topologically, residues 333-358 (LLFLNPQLLKFLIGFVKDPDSYPWVG) are extracellular. Residues 359–379 (YIYAILMFSVTLIQSFFLQCY) form a helical membrane-spanning segment. Residues 380–435 (FQFCFVLGMTVRTTIIASVYKKALTLSNLARRQYTIGETVNLMSVDSQKLMDVTNY) are Cytoplasmic-facing. A helical membrane pass occupies residues 436 to 456 (IHLLWSSVLQIALSIFFLWRE). At 457 to 459 (LGP) the chain is on the extracellular side. Residues 460-480 (SILAGVGLMVLLVPVNGVLAT) form a helical membrane-spanning segment. Topologically, residues 481–542 (KIRKIQVQNM…NLLRFSQLQT (62 aa)) are cytoplasmic. A helical membrane pass occupies residues 543 to 563 (ILIFILHLTPTLVSVITFSVY). Topologically, residues 564–585 (VLVDSQNVLNAEKAFTSITLFN) are extracellular. A helical membrane pass occupies residues 586–606 (ILRFPLAMLPMVISSVIQASV). Residues 607–969 (SVDRLEQYLG…VKFSIYLKYL (363 aa)) are Cytoplasmic-facing. Positions 635–859 (VQFSEASFTW…KGVFAKNWKT (225 aa)) constitute an ABC transporter 1 domain. Residue 669–676 (GTVGSGKS) coordinates ATP. Position 876 is a phosphoserine (Ser-876). The interval 903–927 (RENSLRRTLSRSSRSGSRRGKSLKS) is disordered. The segment covering 908 to 917 (RRTLSRSSRS) has biased composition (low complexity). Phosphoserine occurs at positions 924 and 928. A helical membrane pass occupies residues 970–990 (QAVGWWSLLFIVIFYVLNYVA). Residues 977-1262 (LLFIVIFYVL…LVRMTSEVET (286 aa)) enclose the ABC transmembrane type-1 2 domain. Topologically, residues 991 to 1031 (FIGTNLWLSAWTSDSEKQNGTDNSPSQRDMRIGVFGALGIA) are extracellular. Asn-1009 is a glycosylation site (N-linked (GlcNAc...) asparagine). Residues 1032–1052 (QGIFLLSSSLWSIYACRNASK) traverse the membrane as a helical segment. The Cytoplasmic portion of the chain corresponds to 1053–1095 (TLHRQLLTNILRAPMSFFDTTPTGRIVNRFAGDISTVDDTLPQ). The chain crosses the membrane as a helical span at residues 1096 to 1116 (TLRSWLLCFFGIVSTLVMICM). Ala-1117 is a topological domain (extracellular). The chain crosses the membrane as a helical span at residues 1118–1138 (TPIFIIIIIPLSILYVSVQVF). Residues 1139–1209 (YVATSRQLRR…TSNRWLAIRL (71 aa)) are Cytoplasmic-facing. Residues 1210 to 1230 (ELVGNLIVFCSALLLVIYKNS) form a helical membrane-spanning segment. Residues 1231–1232 (LT) lie on the Extracellular side of the membrane. Residues 1233–1253 (GDTVGFVLSNALNITQTLNWL) traverse the membrane as a helical segment. Topologically, residues 1254 to 1543 (VRMTSEVETN…GIESVNHTEL (290 aa)) are cytoplasmic. In terms of domain architecture, ABC transporter 2 spans 1298–1532 (IQFNNYQVRY…MGPFYLMAKE (235 aa)). Position 1332–1339 (1332–1339 (GRTGAGKS)) interacts with ATP. A Phosphoserine modification is found at Ser-1436.

This sequence belongs to the ABC transporter superfamily. ABCC family. Conjugate transporter (TC 3.A.1.208) subfamily. Expressed in liver.

It localises to the apical cell membrane. It carries out the reaction an S-substituted glutathione(in) + ATP + H2O = an S-substituted glutathione(out) + ADP + phosphate + H(+). It catalyses the reaction taurolithocholate 3-sulfate(in) + ATP + H2O = taurolithocholate 3-sulfate(out) + ADP + phosphate + H(+). The catalysed reaction is ATP + H2O + xenobioticSide 1 = ADP + phosphate + xenobioticSide 2.. The enzyme catalyses leukotriene C4(in) + ATP + H2O = leukotriene C4(out) + ADP + phosphate + H(+). It carries out the reaction 17beta-estradiol 17-O-(beta-D-glucuronate)(in) + ATP + H2O = 17beta-estradiol 17-O-(beta-D-glucuronate)(out) + ADP + phosphate + H(+). It catalyses the reaction (4Z,15Z)-bilirubin IXalpha C8-beta-D-glucuronoside(in) + ATP + H2O = (4Z,15Z)-bilirubin IXalpha C8-beta-D-glucuronoside(out) + ADP + phosphate + H(+). The catalysed reaction is (4Z,15Z)-bilirubin IXalpha C8,C12-beta-D-bisglucuronoside(in) + ATP + H2O = (4Z,15Z)-bilirubin IXalpha C8,C12-beta-D-bisglucuronoside(out) + ADP + phosphate + H(+). ATP-dependent transporter of the ATP-binding cassette (ABC) family that binds and hydrolyzes ATP to enable active transport of various substrates including many drugs, toxicants and endogenous compound across cell membranes. Transports a wide variety of conjugated organic anions such as sulfate-, glucuronide- and glutathione (GSH)-conjugates of endo- and xenobiotics substrates. Mediates hepatobiliary excretion of mono- and bis-glucuronidated bilirubin molecules and therefore play an important role in bilirubin detoxification. Mediates also hepatobiliary excretion of others glucuronide conjugates such as 17beta-estradiol 17-glucosiduronic acid and leukotriene C4. Transports sulfated bile salt such as taurolithocholate sulfate. Transports various anticancer drugs, such as anthracycline, vinca alkaloid and methotrexate and HIV-drugs such as protease inhibitors. The chain is ATP-binding cassette sub-family C member 2 from Mus musculus (Mouse).